A 415-amino-acid polypeptide reads, in one-letter code: ATP-dependent Clp protease ATP-binding subunit ClpX (415 aa).

In terms of domain architecture, ClpX-type ZB spans 1 to 54 (MARNRMGGALICSFCNKPESSERFVVPGPGGIAICDRCVDLCESYIKSYKTVRP). Zn(2+) is bound by residues Cys12, Cys15, Cys35, and Cys38. An ATP-binding site is contributed by 117–124 (PTGSGKTL).

This sequence belongs to the ClpX chaperone family. As to quaternary structure, component of the ClpX-ClpP complex. Forms a hexameric ring that, in the presence of ATP, binds to fourteen ClpP subunits assembled into a disk-like structure with a central cavity, resembling the structure of eukaryotic proteasomes.

ATP-dependent specificity component of the Clp protease. It directs the protease to specific substrates. Can perform chaperone functions in the absence of ClpP. In Treponema denticola (strain ATCC 35405 / DSM 14222 / CIP 103919 / JCM 8153 / KCTC 15104), this protein is ATP-dependent Clp protease ATP-binding subunit ClpX.